Reading from the N-terminus, the 242-residue chain is Orotidine 5'-phosphate decarboxylase (242 aa).

Substrate contacts are provided by residues D16, K37, 64–73 (DLKFHDIPNT), T128, R190, Q199, G219, and R220. The active-site Proton donor is the K66.

It belongs to the OMP decarboxylase family. Type 1 subfamily. In terms of assembly, homodimer.

It carries out the reaction orotidine 5'-phosphate + H(+) = UMP + CO2. The protein operates within pyrimidine metabolism; UMP biosynthesis via de novo pathway; UMP from orotate: step 2/2. Its function is as follows. Catalyzes the decarboxylation of orotidine 5'-monophosphate (OMP) to uridine 5'-monophosphate (UMP). This chain is Orotidine 5'-phosphate decarboxylase, found in Prochlorococcus marinus (strain MIT 9215).